Consider the following 287-residue polypeptide: Glucose uptake protein GlcU (287 aa).

8 helical membrane passes run 4–26 (LLAL…LGGG), 38–60 (ALIV…IFIV), 110–132 (WSTP…GIIL), 153–175 (ILIL…LFNV), 180–197 (ALLP…VLTY), 210–227 (ILPG…FISQ), 232–254 (VATS…IFIL), and 261–283 (RQLI…LGIA).

It belongs to the GRP transporter (TC 2.A.7.5) family.

The protein resides in the cell membrane. Involved in the uptake of glucose. The polypeptide is Glucose uptake protein GlcU (glcU) (Bacillus subtilis (strain 168)).